A 152-amino-acid polypeptide reads, in one-letter code: Probable methionine-R-sulfoxide reductase B (152 aa).

One can recognise a MsrB domain in the interval 27 to 151; that stretch reads QTEWKSVLPN…NSVCMAFEKK (125 aa). Residues Cys66, Cys69, Cys116, and Cys119 each coordinate Zn(2+). Catalysis depends on Cys140, which acts as the Nucleophile.

This sequence belongs to the MsrB Met sulfoxide reductase family. Zn(2+) serves as cofactor.

It catalyses the reaction L-methionyl-[protein] + [thioredoxin]-disulfide + H2O = L-methionyl-(R)-S-oxide-[protein] + [thioredoxin]-dithiol. Functionally, methionine-sulfoxide reductase that specifically reduces methionine (R)-sulfoxide back to methionine. While in many cases, methionine oxidation is the result of random oxidation following oxidative stress, methionine oxidation is also a post-translational modification that takes place on specific residue. This Caenorhabditis elegans protein is Probable methionine-R-sulfoxide reductase B.